The following is a 321-amino-acid chain: ATP-dependent 6-phosphofructokinase (321 aa).

Glycine 10 serves as a coordination point for ATP. Position 20 to 24 (20 to 24 (RAVVR)) interacts with ADP. Residues 71–72 (RD) and 101–104 (GEGT) contribute to the ATP site. Position 102 (glutamate 102) interacts with Mg(2+). 125-127 (TID) lines the substrate pocket. Aspartate 127 serves as the catalytic Proton acceptor. Residue arginine 154 coordinates ADP. Residues arginine 162 and 169-171 (MGR) each bind substrate. Residues 185–187 (GAE) and 213–215 (KLH) contribute to the ADP site. Residues glutamate 222, arginine 246, and 252–255 (HIQR) each bind substrate.

This sequence belongs to the phosphofructokinase type A (PFKA) family. ATP-dependent PFK group I subfamily. Prokaryotic clade 'B1' sub-subfamily. In terms of assembly, homotetramer. Requires Mg(2+) as cofactor.

The protein resides in the cytoplasm. It carries out the reaction beta-D-fructose 6-phosphate + ATP = beta-D-fructose 1,6-bisphosphate + ADP + H(+). The protein operates within carbohydrate degradation; glycolysis; D-glyceraldehyde 3-phosphate and glycerone phosphate from D-glucose: step 3/4. Its activity is regulated as follows. Allosterically activated by ADP and other diphosphonucleosides, and allosterically inhibited by phosphoenolpyruvate. Its function is as follows. Catalyzes the phosphorylation of D-fructose 6-phosphate to fructose 1,6-bisphosphate by ATP, the first committing step of glycolysis. In Aquifex aeolicus (strain VF5), this protein is ATP-dependent 6-phosphofructokinase.